Reading from the N-terminus, the 885-residue chain is MNIRRCGHSENFFFIEVGRSAVTGAGEFWMQVDDSVVAQNMHETILEAMKALSDEFRPRSKSQSSSNCSNPISVPLRRHHLNHPPPSQVGLNRRARTESATATSPAGGAAKHGSSSFRVRASSDGEGTMSRPASMEGSPVSPSASRTQSHRHRGSSRLHPPLNHSRSIPMPATRCSPSATSPVSLSSSSTSGHGSTSDCMCPRRSSASISGSPSDGGFISSDEYGSSPCDFRSSFRSVTPDSMGHTPPAREEELNNYICMGKSSSHLQRGPQQRYQPSRGEELTDFDKVFRKRTHSSGTSPPTVSHQKTPSQSSIEEYTEMMPTHPVRLTSFRHSAFVPTYSYPEECLDLHLEGSRANHKDDGYMPMSPGVAPVSTKTNDYMPMSPKSVSAPQQIINPRWHSAVDSNGYMMMSPSGSCSPDNTNYSKIWTNGTNPKLSIDSIEGKLPCSDYINMSPASGSTTSTPPDSYLNSVEESTKPVYSYFSLPRSFKHVHRKSEDGNLRISANSGHNLYTEDSSSSSTSSDSLGGQDPQQPRKGEGCIQGKRLTRPTRLSLENSSKASTLPRVREPALPPEPKSPGEYVNIEFNDKVFSGGLVPSMCSLPFVQSRVVPQRENLSEYMNMDLGVWRAKTSYASTSSYEPPNKPVNSVCPTETCSSSRPPIRGKPISRDYMSMQLGSLCPDYSQVPPTRLSAKSITLSSSKSNYAEMSSGRVSDNIPAIAPASNSSLSEASRSSLLGQGSGPSAFTRVSLSPNRNPSAKVIRAGDPQGRRRHSSETFSSTPTTARVTTGPVSGEDVKRHSSASFENVWLRPGEIARRDSLQPSDHTHNGLNYIDLDLAKDLSSLDHCNSHQSGVSHPSDDLSPYASITFHKLEEHRSQAETEE.

The region spanning 1–56 (MNIRRCGHSENFFFIEVGRSAVTGAGEFWMQVDDSVVAQNMHETILEAMKALSDEF) is the IRS-type PTB domain. The disordered stretch occupies residues 56 to 225 (FRPRSKSQSS…GGFISSDEYG (170 aa)). 4 stretches are compositionally biased toward low complexity: residues 61-75 (KSQSSSNCSNPISVP), 99-109 (SATATSPAGGA), 176-197 (SPSATSPVSLSSSSTSGHGSTS), and 205-217 (SSASISGSPSDGG). S104 carries the post-translational modification Phosphoserine. Position 257 is a phosphotyrosine; by INSR (Y257). Residues 257–260 (YICM) carry the YXXM motif 1 motif. 2 stretches are compositionally biased toward polar residues: residues 263 to 276 (SSSHLQRGPQQRYQ) and 296 to 313 (SSGTSPPTVSHQKTPSQS). 2 disordered regions span residues 263-282 (SSSHLQRGPQQRYQPSRGEE) and 293-313 (RTHSSGTSPPTVSHQKTPSQS). 5 short sequence motifs (YXXM motif) span residues 318 to 321 (YTEM), 364 to 367 (YMPM), 381 to 384 (YMPM), 409 to 412 (YMMM), and 451 to 454 (YINM). Phosphotyrosine; by INSR is present on residues Y364 and Y381. Y409 is modified (phosphotyrosine). The tract at residues 501-581 (NLRISANSGH…LPPEPKSPGE (81 aa)) is disordered. Residues 504–515 (ISANSGHNLYTE) show a composition bias toward polar residues. The span at 516–526 (DSSSSSTSSDS) shows a compositional bias: low complexity. Phosphotyrosine; by INSR occurs at positions 582 and 620. Residues 582 to 584 (YVN) are GRB2-binding. The YXXM motif 7 motif lies at 620–623 (YMNM). Residues 637-660 (TSSYEPPNKPVNSVCPTETCSSSR) show a composition bias toward polar residues. The segment at 637–665 (TSSYEPPNKPVNSVCPTETCSSSRPPIRG) is disordered. Position 672 is a phosphotyrosine; by INSR (Y672). 2 consecutive short sequence motifs (YXXM motif) follow at residues 672–675 (YMSM) and 706–709 (YAEM). Residues 732–803 (ASRSSLLGQG…SGEDVKRHSS (72 aa)) are disordered. 2 stretches are compositionally biased toward polar residues: residues 743-758 (GPSAFTRVSLSPNRNP) and 777-792 (ETFSSTPTTARVTTGP). Phosphotyrosine; by INSR occurs at positions 834 and 866.

As to quaternary structure, interacts with the NPXY motif of tyrosine-phosphorylated igf1r and insr via the PTB domain. Binds to phosphatidylinositol 3-kinase p85 subunit at a low level in vitro prior to phosphorylation. Binding is greatly enhanced following tyrosine phosphorylation by insr and probably occurs via the phosphorylated YXXM motifs. In terms of processing, phosphorylation of Tyr-582 is required for grb2-binding.

Functionally, may mediate the control of various cellular processes by insulin. When phosphorylated by the insulin receptor binds specifically to various cellular proteins containing SH2 domains such as phosphatidylinositol 3-kinase p85 subunit or grb2. Activates phosphatidylinositol 3-kinase when bound to the regulatory p85 subunit. This is Insulin receptor substrate 1-A (irs1-a) from Xenopus laevis (African clawed frog).